The sequence spans 231 residues: Large ribosomal subunit protein uL1 (231 aa).

This sequence belongs to the universal ribosomal protein uL1 family. As to quaternary structure, part of the 50S ribosomal subunit.

Binds directly to 23S rRNA. The L1 stalk is quite mobile in the ribosome, and is involved in E site tRNA release. Functionally, protein L1 is also a translational repressor protein, it controls the translation of the L11 operon by binding to its mRNA. In Cupriavidus pinatubonensis (strain JMP 134 / LMG 1197) (Cupriavidus necator (strain JMP 134)), this protein is Large ribosomal subunit protein uL1.